The chain runs to 188 residues: dCTP deaminase (188 aa).

DCTP-binding positions include 111–116 (KSTYAR), 135–137 (TLE), Gln-156, Tyr-170, and Gln-180. Glu-137 serves as the catalytic Proton donor/acceptor.

This sequence belongs to the dCTP deaminase family. In terms of assembly, homotrimer.

The catalysed reaction is dCTP + H2O + H(+) = dUTP + NH4(+). Its pathway is pyrimidine metabolism; dUMP biosynthesis; dUMP from dCTP (dUTP route): step 1/2. Its function is as follows. Catalyzes the deamination of dCTP to dUTP. The chain is dCTP deaminase from Legionella pneumophila (strain Paris).